We begin with the raw amino-acid sequence, 447 residues long: Elongation factor 1-alpha (447 aa).

The tr-type G domain maps to 5–230 (KVHINIVVIG…DNINEPKRPS (226 aa)). Positions 14 to 21 (GHVDSGKS) are G1. GTP is bound at residue 14-21 (GHVDSGKS). At K55 the chain carries N6,N6-dimethyllysine. Residues 70–74 (GITID) form a G2 region. At K79 the chain carries N6,N6,N6-trimethyllysine. Residues 91-94 (DAPG) are G3. Residues 91-95 (DAPGH) and 153-156 (NKMD) each bind GTP. Residues 153–156 (NKMD) form a G4 region. K187 carries the post-translational modification N6,N6,N6-trimethyllysine. Residues 194–196 (SGF) form a G5 region. K261 is subject to N6-methyllysine. Residue E289 is modified to 5-glutamyl glycerylphosphorylethanolamine. An N6,N6,N6-trimethyllysine modification is found at K306. Position 362 is a 5-glutamyl glycerylphosphorylethanolamine (E362). An N6,N6,N6-trimethyllysine modification is found at K396.

The protein belongs to the TRAFAC class translation factor GTPase superfamily. Classic translation factor GTPase family. EF-Tu/EF-1A subfamily.

It localises to the cytoplasm. Functionally, this protein promotes the GTP-dependent binding of aminoacyl-tRNA to the A-site of ribosomes during protein biosynthesis. The sequence is that of Elongation factor 1-alpha from Pisum sativum (Garden pea).